The primary structure comprises 329 residues: Ferredoxin--NADP reductase 2 (329 aa).

Thr18, Glu37, Gln45, Tyr50, Val90, Phe124, Asp285, and Ser326 together coordinate FAD.

It belongs to the ferredoxin--NADP reductase type 2 family. As to quaternary structure, homodimer. It depends on FAD as a cofactor.

It carries out the reaction 2 reduced [2Fe-2S]-[ferredoxin] + NADP(+) + H(+) = 2 oxidized [2Fe-2S]-[ferredoxin] + NADPH. In Bacillus mycoides (strain KBAB4) (Bacillus weihenstephanensis), this protein is Ferredoxin--NADP reductase 2.